Consider the following 101-residue polypeptide: Putative membrane protein insertion efficiency factor (101 aa).

Belongs to the UPF0161 family.

Its subcellular location is the cell inner membrane. Could be involved in insertion of integral membrane proteins into the membrane. The polypeptide is Putative membrane protein insertion efficiency factor (Methylobacterium sp. (strain 4-46)).